Here is a 471-residue protein sequence, read N- to C-terminus: MLLPVIMAGGTGSRLWPMSRELYPKQFLRLFGQNSMLQETITRLSGLEIHEPMVICNEEHRFLVAEQLRQLNKLSNNIILEPVGRNTAPAIALAALQATRHGDDPLMLVLAADHIINNQPVFHDAIRVAEQYADEGHLVTFGIVPNAPETGYGYIQRGVALTDSAHTPYQVARFVEKPDRERAEAYLASGEYYWNSGMFMFRAKKYLSELAKFRPDILEACQAAVNAADNGSDFISIPHDIFCECPDESVDYAVMEKTADAVVVGLDADWSDVGSWSALWEVSPKDEQGNVLSGDAWVHNSENCYINSDEKLVAAIGVENLVIVSTKDAVLVMNRERSQDVKKAVEFLKQNQRSEYKRHREIYRPWGRCDVVVQTPRFNVNRITVKPGGAFSMQMHHHRAEHWVILAGTGQVTVNGKQFLLTENQSTFIPIGAEHSLENPGRIPLEVLEIQSGSYLGEDDIIRIKDQYGRC.

This sequence belongs to the mannose-6-phosphate isomerase type 2 family.

It catalyses the reaction alpha-D-mannose 1-phosphate + GTP + H(+) = GDP-alpha-D-mannose + diphosphate. Its pathway is nucleotide-sugar biosynthesis; GDP-alpha-D-mannose biosynthesis; GDP-alpha-D-mannose from alpha-D-mannose 1-phosphate (GTP route): step 1/1. Involved in the biosynthesis of the K2 capsular polysaccharide biosynthesis. The protein is Mannose-1-phosphate guanylyltransferase (manC) of Klebsiella pneumoniae.